The chain runs to 295 residues: Protein FAM110A (295 aa).

Disordered regions lie at residues 117 to 148 (PVSP…PPSI) and 160 to 191 (PASP…KSDL). Composition is skewed to pro residues over residues 138–147 (LATPPRPPPS) and 160–171 (PASPIQPCPSPG).

It belongs to the FAM110 family. In terms of assembly, may interact with CSPP1.

It is found in the cytoplasm. The protein localises to the cytoskeleton. Its subcellular location is the microtubule organizing center. It localises to the centrosome. The protein resides in the spindle pole. This is Protein FAM110A (FAM110A) from Bos taurus (Bovine).